Here is a 941-residue protein sequence, read N- to C-terminus: Bifunctional glutamine synthetase adenylyltransferase/adenylyl-removing enzyme (941 aa).

An adenylyl removase region spans residues 1–437 (MSIPTASLSP…TAEFAELLAP (437 aa)). Positions 444-941 (PDTLADYWRA…FPLGKDEAAL (498 aa)) are adenylyl transferase.

This sequence belongs to the GlnE family. Requires Mg(2+) as cofactor.

It carries out the reaction [glutamine synthetase]-O(4)-(5'-adenylyl)-L-tyrosine + phosphate = [glutamine synthetase]-L-tyrosine + ADP. The catalysed reaction is [glutamine synthetase]-L-tyrosine + ATP = [glutamine synthetase]-O(4)-(5'-adenylyl)-L-tyrosine + diphosphate. Involved in the regulation of glutamine synthetase GlnA, a key enzyme in the process to assimilate ammonia. When cellular nitrogen levels are high, the C-terminal adenylyl transferase (AT) inactivates GlnA by covalent transfer of an adenylyl group from ATP to specific tyrosine residue of GlnA, thus reducing its activity. Conversely, when nitrogen levels are low, the N-terminal adenylyl removase (AR) activates GlnA by removing the adenylyl group by phosphorolysis, increasing its activity. The regulatory region of GlnE binds the signal transduction protein PII (GlnB) which indicates the nitrogen status of the cell. This chain is Bifunctional glutamine synthetase adenylyltransferase/adenylyl-removing enzyme, found in Xanthomonas oryzae pv. oryzae (strain MAFF 311018).